The sequence spans 319 residues: Sliding-clamp-loader large subunit (319 aa).

ATP contacts are provided by residues 12–15, Ile-24, 53–58, and Arg-205; these read EQKY and GTGKTT.

This sequence belongs to the Tevenvirinae sliding-clamp-loader large subunit family. The sliding-clamp-loader consists of 4 large subunits and 1 small subunit. Interacts with the sliding clamp; this interaction allows the sliding-clamp-loader to open the sliding clamp. Part of the replicase complex that includes the DNA polymerase, the polymerase clamp, the clamp loader complex, the single-stranded DNA binding protein, the primase, the helicase and the helicase assembly factor.

Forms the sliding-clamp-loader together with the small subunit. Functions as an ATPase enzyme. The clamp loader holds the clamp in an open conformation and places it onto the DNA. 4 ATP molecules must bind to the sliding-clamp-loader before the latter can open the sliding clamp. ATP hydrolysis triggers the detachment of the sliding clamp from the sliding-clamp-loader, freeing the sliding clamp to track along DNA. The polypeptide is Sliding-clamp-loader large subunit (44) (Enterobacteria phage T4 (Bacteriophage T4)).